Consider the following 578-residue polypeptide: Proline--tRNA ligase (578 aa).

This sequence belongs to the class-II aminoacyl-tRNA synthetase family. ProS type 1 subfamily. In terms of assembly, homodimer.

It localises to the cytoplasm. It catalyses the reaction tRNA(Pro) + L-proline + ATP = L-prolyl-tRNA(Pro) + AMP + diphosphate. Its function is as follows. Catalyzes the attachment of proline to tRNA(Pro) in a two-step reaction: proline is first activated by ATP to form Pro-AMP and then transferred to the acceptor end of tRNA(Pro). As ProRS can inadvertently accommodate and process non-cognate amino acids such as alanine and cysteine, to avoid such errors it has two additional distinct editing activities against alanine. One activity is designated as 'pretransfer' editing and involves the tRNA(Pro)-independent hydrolysis of activated Ala-AMP. The other activity is designated 'posttransfer' editing and involves deacylation of mischarged Ala-tRNA(Pro). The misacylated Cys-tRNA(Pro) is not edited by ProRS. The chain is Proline--tRNA ligase from Burkholderia orbicola (strain AU 1054).